The following is a 1481-amino-acid chain: Structural protein ORF147 (1481 aa).

2 disordered regions span residues 65-88 (AEKR…ENLE) and 1319-1403 (DEKL…PPIP). 3 stretches are compositionally biased toward low complexity: residues 73 to 84 (KGSQKKSNSSSS), 1323 to 1336 (SSTV…SPKT), and 1393 to 1403 (SSRTTITPPIP).

It localises to the virion. In Noctuidae (owlet moths), this protein is Structural protein ORF147.